Here is a 104-residue protein sequence, read N- to C-terminus: Sweet protein mabinlin-1 (104 aa).

Disulfide bonds link C4/C53, C17/C42, C43/C91, and C55/C99.

The protein belongs to the 2S seed storage albumins family. In terms of assembly, heterodimer of a small A and a large B chain linked by disulfide bonds.

Its function is as follows. 2S seed storage protein having sweetness-inducing activity. This form is not heat stable. In Capparis masaikai (Mabinlang), this protein is Sweet protein mabinlin-1.